Here is a 252-residue protein sequence, read N- to C-terminus: Probable oligoribonuclease (252 aa).

The region spanning 81 to 241 is the Exonuclease domain; sequence VWIDCEMTGL…ALSDILESIG (161 aa). Residue Y202 is part of the active site.

This sequence belongs to the oligoribonuclease family.

The protein localises to the cytoplasm. It is found in the nucleus. Its function is as follows. 3'-to-5' exoribonuclease specific for small oligoribonucleotides. The chain is Probable oligoribonuclease (rex2) from Schizosaccharomyces pombe (strain 972 / ATCC 24843) (Fission yeast).